A 148-amino-acid polypeptide reads, in one-letter code: Small ribosomal subunit protein uS13 (148 aa).

The segment at 128–148 (RGQRTKSTGRRGSTIGVRKKK) is disordered.

Belongs to the universal ribosomal protein uS13 family. As to quaternary structure, part of the 30S ribosomal subunit. Forms a loose heterodimer with protein S19. Forms two bridges to the 50S subunit in the 70S ribosome.

Located at the top of the head of the 30S subunit, it contacts several helices of the 16S rRNA. In the 70S ribosome it contacts the 23S rRNA (bridge B1a) and protein L5 of the 50S subunit (bridge B1b), connecting the 2 subunits; these bridges are implicated in subunit movement. The sequence is that of Small ribosomal subunit protein uS13 from Methanococcoides burtonii (strain DSM 6242 / NBRC 107633 / OCM 468 / ACE-M).